Reading from the N-terminus, the 266-residue chain is Hydroxyethylthiazole kinase (266 aa).

Residue Met44 coordinates substrate. Residues Lys120 and Thr166 each contribute to the ATP site. Gly193 is a binding site for substrate.

Belongs to the Thz kinase family. Requires Mg(2+) as cofactor.

The enzyme catalyses 5-(2-hydroxyethyl)-4-methylthiazole + ATP = 4-methyl-5-(2-phosphooxyethyl)-thiazole + ADP + H(+). It functions in the pathway cofactor biosynthesis; thiamine diphosphate biosynthesis; 4-methyl-5-(2-phosphoethyl)-thiazole from 5-(2-hydroxyethyl)-4-methylthiazole: step 1/1. Its function is as follows. Catalyzes the phosphorylation of the hydroxyl group of 4-methyl-5-beta-hydroxyethylthiazole (THZ). This chain is Hydroxyethylthiazole kinase, found in Syntrophomonas wolfei subsp. wolfei (strain DSM 2245B / Goettingen).